Here is a 442-residue protein sequence, read N- to C-terminus: tRNA-2-methylthio-N(6)-dimethylallyladenosine synthase (442 aa).

An MTTase N-terminal domain is found at 2-117; sequence KSLYIKTYGC…LPELIVKASR (116 aa). [4Fe-4S] cluster contacts are provided by cysteine 11, cysteine 47, cysteine 80, cysteine 157, cysteine 161, and cysteine 164. Positions 143 to 374 constitute a Radical SAM core domain; sequence NSQGSSAFLS…QKLINKQQLE (232 aa). The TRAM domain maps to 377–441; the sequence is QSMVGKTIPV…QNSLLGRELQ (65 aa).

The protein belongs to the methylthiotransferase family. MiaB subfamily. As to quaternary structure, monomer. [4Fe-4S] cluster serves as cofactor.

It localises to the cytoplasm. The catalysed reaction is N(6)-dimethylallyladenosine(37) in tRNA + (sulfur carrier)-SH + AH2 + 2 S-adenosyl-L-methionine = 2-methylsulfanyl-N(6)-dimethylallyladenosine(37) in tRNA + (sulfur carrier)-H + 5'-deoxyadenosine + L-methionine + A + S-adenosyl-L-homocysteine + 2 H(+). Functionally, catalyzes the methylthiolation of N6-(dimethylallyl)adenosine (i(6)A), leading to the formation of 2-methylthio-N6-(dimethylallyl)adenosine (ms(2)i(6)A) at position 37 in tRNAs that read codons beginning with uridine. This is tRNA-2-methylthio-N(6)-dimethylallyladenosine synthase from Wolbachia sp. subsp. Brugia malayi (strain TRS).